Here is a 317-residue protein sequence, read N- to C-terminus: Transaldolase (317 aa).

Lys132 serves as the catalytic Schiff-base intermediate with substrate.

The protein belongs to the transaldolase family. Type 1 subfamily. In terms of assembly, homodimer.

It is found in the cytoplasm. It catalyses the reaction D-sedoheptulose 7-phosphate + D-glyceraldehyde 3-phosphate = D-erythrose 4-phosphate + beta-D-fructose 6-phosphate. It participates in carbohydrate degradation; pentose phosphate pathway; D-glyceraldehyde 3-phosphate and beta-D-fructose 6-phosphate from D-ribose 5-phosphate and D-xylulose 5-phosphate (non-oxidative stage): step 2/3. Functionally, transaldolase is important for the balance of metabolites in the pentose-phosphate pathway. In Edwardsiella ictaluri (strain 93-146), this protein is Transaldolase.